The sequence spans 330 residues: Beta-hexosaminidase (330 aa).

Substrate is bound by residues Asp-62, Arg-70, Arg-133, and 163-164; that span reads KH. The Proton donor/acceptor role is filled by His-176. The active-site Nucleophile is the Asp-246.

Belongs to the glycosyl hydrolase 3 family. NagZ subfamily.

The protein localises to the cytoplasm. The enzyme catalyses Hydrolysis of terminal non-reducing N-acetyl-D-hexosamine residues in N-acetyl-beta-D-hexosaminides.. Its pathway is cell wall biogenesis; peptidoglycan recycling. Plays a role in peptidoglycan recycling by cleaving the terminal beta-1,4-linked N-acetylglucosamine (GlcNAc) from peptide-linked peptidoglycan fragments, giving rise to free GlcNAc, anhydro-N-acetylmuramic acid and anhydro-N-acetylmuramic acid-linked peptides. The polypeptide is Beta-hexosaminidase (Idiomarina loihiensis (strain ATCC BAA-735 / DSM 15497 / L2-TR)).